The sequence spans 426 residues: CinA-like protein (426 aa).

It belongs to the CinA family.

In Gloeobacter violaceus (strain ATCC 29082 / PCC 7421), this protein is CinA-like protein.